The primary structure comprises 209 residues: Uracil phosphoribosyltransferase (209 aa).

5-phospho-alpha-D-ribose 1-diphosphate is bound by residues Arg79, Arg104, and 131–139 (DPMLATGNS). Uracil-binding positions include Ile194 and 199–201 (GDA). Asp200 contributes to the 5-phospho-alpha-D-ribose 1-diphosphate binding site.

This sequence belongs to the UPRTase family. The cofactor is Mg(2+).

The enzyme catalyses UMP + diphosphate = 5-phospho-alpha-D-ribose 1-diphosphate + uracil. It participates in pyrimidine metabolism; UMP biosynthesis via salvage pathway; UMP from uracil: step 1/1. Allosterically activated by GTP. Its function is as follows. Catalyzes the conversion of uracil and 5-phospho-alpha-D-ribose 1-diphosphate (PRPP) to UMP and diphosphate. The polypeptide is Uracil phosphoribosyltransferase (Rhodococcus jostii (strain RHA1)).